The following is a 483-amino-acid chain: Lipoamide acyltransferase component of branched-chain alpha-keto acid dehydrogenase complex, mitochondrial (483 aa).

Residues 1-75 (MIARRIWRSH…AMATDSNSGL (75 aa)) constitute a mitochondrion transit peptide. A Lipoyl-binding domain is found at 76 to 150 (IDVPLAQTGE…KVGETLVRLA (75 aa)). K116 carries the N6-lipoyllysine modification. Residues 183–220 (LSTPAVRNLAKDLGIDINVITGTGKDGRVLKEDVLRFS) enclose the Peripheral subunit-binding (PSBD) domain. Residues H453 and D457 contribute to the active site.

This sequence belongs to the 2-oxoacid dehydrogenase family. Forms a 24-polypeptide structural core with octahedral symmetry. The cofactor is (R)-lipoate. Expressed in the non-photosynthetic organs such as siliques, flowers and roots.

It is found in the mitochondrion matrix. It carries out the reaction N(6)-[(R)-dihydrolipoyl]-L-lysyl-[protein] + 2-methylpropanoyl-CoA = N(6)-[(R)-S(8)-2-methylpropanoyldihydrolipoyl]-L-lysyl-[protein] + CoA. In terms of biological role, the branched-chain alpha-keto dehydrogenase complex catalyzes the overall conversion of alpha-keto acids to acyl-CoA and CO(2). It contains multiple copies of three enzymatic components: branched-chain alpha-keto acid decarboxylase (E1), lipoamide acyltransferase (E2) and lipoamide dehydrogenase (E3). Within this complex, the catalytic function of this enzyme is to accept, and to transfer to coenzyme A, acyl groups that are generated by the branched-chain alpha-keto acid decarboxylase component. Required during sugar starvation and acts under the control of a sugar-sensing mechanism involving Ser/Thr kinases and phosphatases. This Arabidopsis thaliana (Mouse-ear cress) protein is Lipoamide acyltransferase component of branched-chain alpha-keto acid dehydrogenase complex, mitochondrial (BCE2).